A 235-amino-acid polypeptide reads, in one-letter code: Thaumatin II (235 aa).

The signal sequence occupies residues 1–22 (MAATTCFFFLFPFLLLLTLSRA). Cystine bridges form between Cys31/Cys226, Cys78/Cys88, Cys93/Cys99, Cys143/Cys215, Cys148/Cys199, Cys156/Cys167, Cys171/Cys180, and Cys181/Cys186. Residues 230-235 (LELEDE) constitute a propeptide, removed in mature form.

Belongs to the thaumatin family.

It localises to the cytoplasmic vesicle. Its function is as follows. Taste-modifying protein; intensely sweet-tasting. It is 100000 times sweeter than sucrose on a molar basis. This chain is Thaumatin II, found in Thaumatococcus daniellii (Katemfe).